The sequence spans 281 residues: Bifunctional protein FolD (281 aa).

NADP(+) contacts are provided by residues 165-167 (GRS) and Ser-190.

Belongs to the tetrahydrofolate dehydrogenase/cyclohydrolase family. In terms of assembly, homodimer.

It catalyses the reaction (6R)-5,10-methylene-5,6,7,8-tetrahydrofolate + NADP(+) = (6R)-5,10-methenyltetrahydrofolate + NADPH. It carries out the reaction (6R)-5,10-methenyltetrahydrofolate + H2O = (6R)-10-formyltetrahydrofolate + H(+). Its pathway is one-carbon metabolism; tetrahydrofolate interconversion. In terms of biological role, catalyzes the oxidation of 5,10-methylenetetrahydrofolate to 5,10-methenyltetrahydrofolate and then the hydrolysis of 5,10-methenyltetrahydrofolate to 10-formyltetrahydrofolate. The chain is Bifunctional protein FolD from Polaromonas sp. (strain JS666 / ATCC BAA-500).